Here is a 339-residue protein sequence, read N- to C-terminus: 4-hydroxythreonine-4-phosphate dehydrogenase (339 aa).

Residues histidine 141 and threonine 142 each coordinate substrate. Positions 171, 215, and 270 each coordinate a divalent metal cation. Substrate is bound by residues lysine 278, asparagine 287, and arginine 296.

It belongs to the PdxA family. As to quaternary structure, homodimer. The cofactor is Zn(2+). Mg(2+) is required as a cofactor. Requires Co(2+) as cofactor.

It localises to the cytoplasm. It carries out the reaction 4-(phosphooxy)-L-threonine + NAD(+) = 3-amino-2-oxopropyl phosphate + CO2 + NADH. Its pathway is cofactor biosynthesis; pyridoxine 5'-phosphate biosynthesis; pyridoxine 5'-phosphate from D-erythrose 4-phosphate: step 4/5. Catalyzes the NAD(P)-dependent oxidation of 4-(phosphooxy)-L-threonine (HTP) into 2-amino-3-oxo-4-(phosphooxy)butyric acid which spontaneously decarboxylates to form 3-amino-2-oxopropyl phosphate (AHAP). The protein is 4-hydroxythreonine-4-phosphate dehydrogenase of Geobacter metallireducens (strain ATCC 53774 / DSM 7210 / GS-15).